The sequence spans 241 residues: Probable transcriptional regulatory protein FMG_0893 (241 aa).

The protein belongs to the TACO1 family.

It is found in the cytoplasm. This is Probable transcriptional regulatory protein FMG_0893 from Finegoldia magna (strain ATCC 29328 / DSM 20472 / WAL 2508) (Peptostreptococcus magnus).